The sequence spans 178 residues: Bifunctional protein PyrR (178 aa).

The short motif at 99–111 (VILVDDVLFTGRT) is the PRPP-binding element.

This sequence belongs to the purine/pyrimidine phosphoribosyltransferase family. PyrR subfamily. In terms of assembly, homodimer and homohexamer; in equilibrium.

It catalyses the reaction UMP + diphosphate = 5-phospho-alpha-D-ribose 1-diphosphate + uracil. Its function is as follows. Regulates transcriptional attenuation of the pyrimidine nucleotide (pyr) operon by binding in a uridine-dependent manner to specific sites on pyr mRNA. This disrupts an antiterminator hairpin in the RNA and favors formation of a downstream transcription terminator, leading to a reduced expression of downstream genes. Also displays a weak uracil phosphoribosyltransferase activity which is not physiologically significant. The polypeptide is Bifunctional protein PyrR (Ligilactobacillus salivarius (strain UCC118) (Lactobacillus salivarius)).